Consider the following 287-residue polypeptide: Undecaprenyl-diphosphatase (287 aa).

The next 7 membrane-spanning stretches (helical) occupy residues Leu-6 to Val-26, Ser-45 to Phe-65, Ala-85 to Ile-105, Val-111 to Trp-131, Ala-204 to Leu-224, Ala-238 to Leu-258, and Thr-265 to Met-285.

It belongs to the UppP family.

The protein resides in the cell inner membrane. It catalyses the reaction di-trans,octa-cis-undecaprenyl diphosphate + H2O = di-trans,octa-cis-undecaprenyl phosphate + phosphate + H(+). Its function is as follows. Catalyzes the dephosphorylation of undecaprenyl diphosphate (UPP). Confers resistance to bacitracin. This Bordetella petrii (strain ATCC BAA-461 / DSM 12804 / CCUG 43448) protein is Undecaprenyl-diphosphatase.